Here is a 355-residue protein sequence, read N- to C-terminus: Alanine racemase (355 aa).

The active-site Proton acceptor; specific for D-alanine is the K34. K34 is modified (N6-(pyridoxal phosphate)lysine). Residue R133 coordinates substrate. The active-site Proton acceptor; specific for L-alanine is Y249. M297 contacts substrate.

The protein belongs to the alanine racemase family. The cofactor is pyridoxal 5'-phosphate.

The enzyme catalyses L-alanine = D-alanine. Its pathway is amino-acid biosynthesis; D-alanine biosynthesis; D-alanine from L-alanine: step 1/1. In terms of biological role, catalyzes the interconversion of L-alanine and D-alanine. May also act on other amino acids. The polypeptide is Alanine racemase (alr) (Rickettsia akari (strain Hartford)).